A 504-amino-acid polypeptide reads, in one-letter code: Maturase K (504 aa).

This sequence belongs to the intron maturase 2 family. MatK subfamily.

Its subcellular location is the plastid. It localises to the chloroplast. Usually encoded in the trnK tRNA gene intron. Probably assists in splicing its own and other chloroplast group II introns. This is Maturase K from Cynophalla hastata (Broadleaf caper).